The chain runs to 373 residues: WAT1-related protein At4g08300 (373 aa).

10 helical membrane-spanning segments follow: residues 11-31 (PIIAIISLQFGYAGMYIITMV), 41-61 (ILATYRHVVATIVIAPFALIL), 67-87 (PKMTWPLFLRILALGFLEPLL), 102-122 (TYSSAFVNALPAITFIMAVIF), 139-159 (IGTAITVGGAMVMTLYKGPAI), 185-205 (WVTGTLAVMGSITTWAGFFIL), 219-239 (LVMWICAMGTVLNTIASLIMV), 255-275 (AAVYSGVVCSGMAYYIQSIVI), 281-301 (VFTTSFSPMCMIITAFLGVLV), and 306-326 (IHLGSIIGAIFIVFGLYSVVW). EamA domains lie at 23–151 (AGMY…AMVM) and 198–325 (TWAG…YSVV).

Belongs to the drug/metabolite transporter (DMT) superfamily. Plant drug/metabolite exporter (P-DME) (TC 2.A.7.4) family.

It localises to the membrane. This chain is WAT1-related protein At4g08300, found in Arabidopsis thaliana (Mouse-ear cress).